The following is a 172-amino-acid chain: Translation initiation factor IF-3 (172 aa).

Belongs to the IF-3 family. Monomer.

The protein resides in the cytoplasm. IF-3 binds to the 30S ribosomal subunit and shifts the equilibrium between 70S ribosomes and their 50S and 30S subunits in favor of the free subunits, thus enhancing the availability of 30S subunits on which protein synthesis initiation begins. In Bartonella quintana (strain Toulouse) (Rochalimaea quintana), this protein is Translation initiation factor IF-3.